The following is a 210-amino-acid chain: Small ribosomal subunit protein bS6 (210 aa).

The segment at 99-210 (PLPTKRNTKS…KDTKEVKEEG (112 aa)) is disordered. Residues 120–210 (NDTKEVKEAK…KDTKEVKEEG (91 aa)) show a composition bias toward basic and acidic residues.

It belongs to the bacterial ribosomal protein bS6 family.

Functionally, binds together with bS18 to 16S ribosomal RNA. The protein is Small ribosomal subunit protein bS6 of Prochlorococcus marinus (strain SARG / CCMP1375 / SS120).